The primary structure comprises 61 residues: Potassium channel toxin alpha-KTx 15.6 (61 aa).

The N-terminal stretch at 1–23 is a signal peptide; the sequence is MKAFYGMLVIFILCSTCYISVDS. Glutamine 24 bears the Pyrrolidone carboxylic acid mark. 3 cysteine pairs are disulfide-bonded: cysteine 31–cysteine 52, cysteine 37–cysteine 57, and cysteine 41–cysteine 59.

Belongs to the short scorpion toxin superfamily. Potassium channel inhibitor family. Alpha-KTx 15 subfamily. As to expression, expressed by the venom gland.

It is found in the secreted. Functionally, irreversibly blocks the A-type voltage-gated potassium channels in rat cerebellum granular cells (190 nM induce 50% inhibitory effect) (IC(50)=190 nM). Also weakly inhibits Kv1.2/KCNA2 and Kv1.3/KCNA3. In Tityus discrepans (Venezuelan scorpion), this protein is Potassium channel toxin alpha-KTx 15.6.